Here is a 392-residue protein sequence, read N- to C-terminus: Phospho-N-acetylmuramoyl-pentapeptide-transferase (392 aa).

Transmembrane regions (helical) follow at residues 28–48 (RALM…PFVI), 76–96 (TMGG…WFDL), 100–120 (FVWI…VDDW), 137–157 (YLWQ…SISE), 193–213 (ISYP…IVGS), 225–245 (GLAI…AYVT), 262–282 (SGEL…FLWF), 289–309 (VFMG…IAVI), 314–334 (IVLA…MLQV), and 369–389 (QVVV…LSTL).

This sequence belongs to the glycosyltransferase 4 family. MraY subfamily. Requires Mg(2+) as cofactor.

It localises to the cell inner membrane. The enzyme catalyses UDP-N-acetyl-alpha-D-muramoyl-L-alanyl-gamma-D-glutamyl-meso-2,6-diaminopimeloyl-D-alanyl-D-alanine + di-trans,octa-cis-undecaprenyl phosphate = di-trans,octa-cis-undecaprenyl diphospho-N-acetyl-alpha-D-muramoyl-L-alanyl-D-glutamyl-meso-2,6-diaminopimeloyl-D-alanyl-D-alanine + UMP. It functions in the pathway cell wall biogenesis; peptidoglycan biosynthesis. Its function is as follows. Catalyzes the initial step of the lipid cycle reactions in the biosynthesis of the cell wall peptidoglycan: transfers peptidoglycan precursor phospho-MurNAc-pentapeptide from UDP-MurNAc-pentapeptide onto the lipid carrier undecaprenyl phosphate, yielding undecaprenyl-pyrophosphoryl-MurNAc-pentapeptide, known as lipid I. This chain is Phospho-N-acetylmuramoyl-pentapeptide-transferase, found in Polaromonas naphthalenivorans (strain CJ2).